The following is a 34-amino-acid chain: Photosystem II reaction center protein Psb30 (34 aa).

Residues Val5 to Leu25 form a helical membrane-spanning segment.

Belongs to the Psb30/Ycf12 family. In terms of assembly, PSII is composed of 1 copy each of membrane proteins PsbA, PsbB, PsbC, PsbD, PsbE, PsbF, PsbH, PsbI, PsbJ, PsbK, PsbL, PsbM, PsbT, PsbX, PsbY, PsbZ, Psb30/Ycf12, peripheral proteins of the oxygen-evolving complex and a large number of cofactors. It forms dimeric complexes.

It localises to the plastid. The protein localises to the chloroplast thylakoid membrane. In terms of biological role, a core subunit of photosystem II (PSII), probably helps stabilize the reaction center. The chain is Photosystem II reaction center protein Psb30 from Tupiella akineta (Green alga).